Reading from the N-terminus, the 799-residue chain is ATP-dependent RNA helicase DBP7 (799 aa).

2 disordered regions span residues 34–177 (KALR…RRIR) and 201–229 (DRIA…NAAL). Composition is skewed to basic and acidic residues over residues 35 to 49 (ALRE…KKEQ), 56 to 66 (IEDRMKRREQD), 73 to 100 (KPYD…KSYD), 114 to 132 (EKYQ…ERWV), and 139 to 172 (NRRD…DGSL). Acidic residues predominate over residues 208 to 220 (VQMEDEEEEEAEN). Residues 233–261 (TTFSGLGCSQRLVDALVGMQLAKPTKIQR) carry the Q motif motif. The Helicase ATP-binding domain occupies 265 to 465 (PRLIQRERDL…KSTLKDADWV (201 aa)). ATP contacts are provided by residues 278–285 (AQTGSGKT) and 306–313 (TGLFAVIL). Residues 391–394 (DEGD) carry the DEAD box motif. Residues 511–679 (DILQSSEKTN…NILAAGFGGK (169 aa)) enclose the Helicase C-terminal domain. The segment at 750-799 (KLGKKKDPEKIKVNKDGSLDETQARKKMLDRSRKHVYNSGESAMGGYVLE) is disordered. A compositionally biased stretch (basic and acidic residues) spans 754–780 (KKDPEKIKVNKDGSLDETQARKKMLDR).

It belongs to the DEAD box helicase family. DDX31/DBP7 subfamily.

The protein localises to the nucleus. Its subcellular location is the nucleolus. It carries out the reaction ATP + H2O = ADP + phosphate + H(+). Functionally, ATP-binding RNA helicase involved in the biogenesis of 60S ribosomal subunits and is required for the normal formation of 25S and 5.8S rRNAs. This chain is ATP-dependent RNA helicase DBP7 (DBP7), found in Yarrowia lipolytica (strain CLIB 122 / E 150) (Yeast).